A 596-amino-acid chain; its full sequence is Elongation factor 4 (596 aa).

The tr-type G domain maps to 2–184 (RNIRNFSIIA…AIVHRIPPPK (183 aa)). GTP-binding positions include 14–19 (DHGKST) and 131–134 (NKID).

Belongs to the TRAFAC class translation factor GTPase superfamily. Classic translation factor GTPase family. LepA subfamily.

It localises to the cell inner membrane. The enzyme catalyses GTP + H2O = GDP + phosphate + H(+). In terms of biological role, required for accurate and efficient protein synthesis under certain stress conditions. May act as a fidelity factor of the translation reaction, by catalyzing a one-codon backward translocation of tRNAs on improperly translocated ribosomes. Back-translocation proceeds from a post-translocation (POST) complex to a pre-translocation (PRE) complex, thus giving elongation factor G a second chance to translocate the tRNAs correctly. Binds to ribosomes in a GTP-dependent manner. The sequence is that of Elongation factor 4 from Xanthomonas euvesicatoria pv. vesicatoria (strain 85-10) (Xanthomonas campestris pv. vesicatoria).